A 555-amino-acid chain; its full sequence is Urocanate hydratase (555 aa).

NAD(+) contacts are provided by residues 51–52, Gln-129, 175–177, Glu-195, 262–266, 272–273, and Tyr-321; these read GG, GMG, QTSAH, and YL. Cys-409 is a catalytic residue. NAD(+) is bound at residue Gly-491.

This sequence belongs to the urocanase family. Requires NAD(+) as cofactor.

It localises to the cytoplasm. It catalyses the reaction 4-imidazolone-5-propanoate = trans-urocanate + H2O. Its pathway is amino-acid degradation; L-histidine degradation into L-glutamate; N-formimidoyl-L-glutamate from L-histidine: step 2/3. In terms of biological role, catalyzes the conversion of urocanate to 4-imidazolone-5-propionate. This Xanthomonas campestris pv. campestris (strain ATCC 33913 / DSM 3586 / NCPPB 528 / LMG 568 / P 25) protein is Urocanate hydratase.